A 292-amino-acid polypeptide reads, in one-letter code: Undecaprenyl-diphosphatase 2 (292 aa).

A run of 5 helical transmembrane segments spans residues 89 to 109 (WLVI…QDAI), 118 to 138 (LIAT…WYAS), 203 to 223 (FLLA…SIGG), 232 to 252 (PTIL…AWFL), and 263 to 283 (FVLY…GGAL).

It belongs to the UppP family.

It localises to the cell membrane. It catalyses the reaction di-trans,octa-cis-undecaprenyl diphosphate + H2O = di-trans,octa-cis-undecaprenyl phosphate + phosphate + H(+). Its function is as follows. Catalyzes the dephosphorylation of undecaprenyl diphosphate (UPP). Confers resistance to bacitracin. The chain is Undecaprenyl-diphosphatase 2 from Frankia casuarinae (strain DSM 45818 / CECT 9043 / HFP020203 / CcI3).